Reading from the N-terminus, the 730-residue chain is Catalase R (730 aa).

H105 is an active-site residue. Position 392 (Y392) interacts with heme. A disordered region spans residues 403–433 (PNFEQIPVNRPRKPVHNNNRDGFGQQQIPTN).

Belongs to the catalase family. The cofactor is heme.

The enzyme catalyses 2 H2O2 = O2 + 2 H2O. Its function is as follows. Occurs in almost all aerobically respiring organisms and serves to protect cells from the toxic effects of hydrogen peroxide. The sequence is that of Catalase R (catR) from Aspergillus niger.